The sequence spans 220 residues: Telomere repeats-binding bouquet formation protein 2 (220 aa).

This sequence belongs to the TERB2 family. As to quaternary structure, component of the MAJIN-TERB1-TERB2 complex, composed of MAJIN, TERB1 and TERB2.

Its subcellular location is the chromosome. The protein localises to the telomere. It is found in the nucleus inner membrane. Meiosis-specific telomere-associated protein involved in meiotic telomere attachment to the nucleus inner membrane, a crucial step for homologous pairing and synapsis. Component of the MAJIN-TERB1-TERB2 complex, which promotes telomere cap exchange by mediating attachment of telomeric DNA to the inner nuclear membrane and replacement of the protective cap of telomeric chromosomes: in early meiosis, the MAJIN-TERB1-TERB2 complex associates with telomeric DNA and the shelterin/telosome complex. During prophase, the complex matures and promotes release of the shelterin/telosome complex from telomeric DNA. In Homo sapiens (Human), this protein is Telomere repeats-binding bouquet formation protein 2 (TERB2).